Consider the following 530-residue polypeptide: Phosphoenolpyruvate carboxykinase (ATP) (530 aa).

Substrate contacts are provided by R58, Y195, and K201. ATP is bound by residues K201, H220, and 236–244 (GLSGTGKTT). K201 and H220 together coordinate Mn(2+). D257 is a Mn(2+) binding site. ATP-binding positions include E285, R321, 440–441 (RI), and T446. R321 contributes to the substrate binding site.

Belongs to the phosphoenolpyruvate carboxykinase (ATP) family. The cofactor is Mn(2+).

It localises to the cytoplasm. The catalysed reaction is oxaloacetate + ATP = phosphoenolpyruvate + ADP + CO2. The protein operates within carbohydrate biosynthesis; gluconeogenesis. Involved in the gluconeogenesis. Catalyzes the conversion of oxaloacetate (OAA) to phosphoenolpyruvate (PEP) through direct phosphoryl transfer between the nucleoside triphosphate and OAA. This chain is Phosphoenolpyruvate carboxykinase (ATP), found in Staphylococcus epidermidis (strain ATCC 35984 / DSM 28319 / BCRC 17069 / CCUG 31568 / BM 3577 / RP62A).